Here is a 156-residue protein sequence, read N- to C-terminus: Small ribosomal subunit protein uS7 (156 aa).

Belongs to the universal ribosomal protein uS7 family. Part of the 30S ribosomal subunit. Contacts proteins S9 and S11.

Functionally, one of the primary rRNA binding proteins, it binds directly to 16S rRNA where it nucleates assembly of the head domain of the 30S subunit. Is located at the subunit interface close to the decoding center, probably blocks exit of the E-site tRNA. This Polynucleobacter asymbioticus (strain DSM 18221 / CIP 109841 / QLW-P1DMWA-1) (Polynucleobacter necessarius subsp. asymbioticus) protein is Small ribosomal subunit protein uS7.